Consider the following 531-residue polypeptide: High affinity cysteine transporter (531 aa).

Over 1–54 (MSKVDVKIGADSISSSDEILVPSRLADVTLAFMEENDAAVPEITPEQEKKLKRK) the chain is Cytoplasmic. A helical transmembrane segment spans residues 55–75 (LFLTIFTFVSAINLLLYMDKA). Residues 76 to 97 (TLSYDSILGFFEDTGLTQNTYN) lie on the Lumenal side of the membrane. A helical transmembrane segment spans residues 98-118 (TVNTLFYVGFAIGQFPGQYLA). Residues 119-120 (QK) are Cytoplasmic-facing. The chain crosses the membrane as a helical span at residues 121–141 (LPLGKFLGGLLATWTILIFLS). Topologically, residues 142 to 154 (CTAYNFSGVVALR) are lumenal. N-linked (GlcNAc...) asparagine glycosylation is present at asparagine 146. The chain crosses the membrane as a helical span at residues 155–175 (FFLGLTESVVIPILITTMGMF). Residues 176 to 186 (FDASERAAAQP) lie on the Cytoplasmic side of the membrane. The chain crosses the membrane as a helical span at residues 187 to 207 (FFFAACMGSPIPTGFIAYGVL). The Lumenal portion of the chain corresponds to 208–218 (HITNPSISLWK). A helical membrane pass occupies residues 219–239 (IFTIIIGGLTFIMTVVVILWF). Residues 240-285 (PNNPADVKFFSIQERVWIIRRVQASTGSSIEQKVFKKSQFREAMKD) lie on the Cytoplasmic side of the membrane. The helical transmembrane segment at 286–306 (YITWLFGLFFLLQQLANNLPY) threads the bilayer. Residues 307–324 (QQNLLFEGMGGVDALGST) are Lumenal-facing. Residues 325-345 (LVSVAGAGFAVVCAFIATLML) form a helical membrane-spanning segment. The Cytoplasmic portion of the chain corresponds to 346 to 352 (AKWKNIS). A helical membrane pass occupies residues 353 to 373 (ALTAIFWTLPALVGSIAAAAL). The Lumenal segment spans residues 374 to 378 (PWDNK). The chain crosses the membrane as a helical span at residues 379–399 (IGILANICMAGQIFGIPFIIA). Residues 400 to 413 (LSWASSSASGYTKK) are Cytoplasmic-facing. The helical transmembrane segment at 414 to 436 (LTRSSVSLFAMGIANIISPQIWR) threads the bilayer. Topologically, residues 437–447 (EKDSPRFLPAW) are lumenal. Residues 448 to 468 (IVQIVLSFSLAPAILLLIHFI) traverse the membrane as a helical segment. Positions 469–498 (LKRRNNQRLKNYDENLQNYLDRIQLIESEN) form a coiled coil. Residues 469–531 (LKRRNNQRLK…LENETFIYPL (63 aa)) lie on the Cytoplasmic side of the membrane. Residues serine 500 and serine 501 each carry the phosphoserine modification.

It belongs to the major facilitator superfamily. Allantoate permease family.

The protein resides in the cell membrane. It localises to the endoplasmic reticulum membrane. Its function is as follows. High affinity cysteine-specific transporter. Major contributor to cysteine transport when cysteine, at low concentrations, is provided as the sole sulfur source. The sequence is that of High affinity cysteine transporter (YCT1) from Saccharomyces cerevisiae (strain ATCC 204508 / S288c) (Baker's yeast).